Consider the following 434-residue polypeptide: Mitochondrial distribution and morphology protein 10 (434 aa).

Belongs to the MDM10 family. Component of the ER-mitochondria encounter structure (ERMES) or MDM complex, composed of mmm1, mdm10, mdm12 and mdm34. Associates with the mitochondrial outer membrane sorting assembly machinery SAM(core) complex.

Its subcellular location is the mitochondrion outer membrane. In terms of biological role, component of the ERMES/MDM complex, which serves as a molecular tether to connect the endoplasmic reticulum and mitochondria. Components of this complex are involved in the control of mitochondrial shape and protein biogenesis and may function in phospholipid exchange. mdm10 is involved in the late assembly steps of the general translocase of the mitochondrial outer membrane (TOM complex). Functions in the tom40-specific route of the assembly of outer membrane beta-barrel proteins, including the association of tom40 with the receptor tom22 and small TOM proteins. Can associate with the SAM(core) complex as well as the mdm12-mmm1 complex, both involved in late steps of the major beta-barrel assembly pathway, that is responsible for biogenesis of all outer membrane beta-barrel proteins. May act as a switch that shuttles between both complexes and channels precursor proteins into the tom40-specific pathway. Plays a role in mitochondrial morphology and in the inheritance of mitochondria. The chain is Mitochondrial distribution and morphology protein 10 (mdmB) from Aspergillus niger (strain ATCC MYA-4892 / CBS 513.88 / FGSC A1513).